A 102-amino-acid polypeptide reads, in one-letter code: Small ribosomal subunit protein uS10 (102 aa).

This sequence belongs to the universal ribosomal protein uS10 family. Part of the 30S ribosomal subunit.

Involved in the binding of tRNA to the ribosomes. The sequence is that of Small ribosomal subunit protein uS10 from Leuconostoc citreum (strain KM20).